We begin with the raw amino-acid sequence, 801 residues long: MPGLHVVSFLVVLLLQLRSSGMHLVASELFWGNTLPNGDIYVGSFDGLVPHGPGKYMWTDGALYDGEWDKSKMTGRGLIQWPSGASYEGDFRGGFIDGAGTFKGVDGSVYKGSWRMNKKHGMGTMVYSNSDTYEGFWNEGLPDEFGKYTWADGNVYIGRWKSGKMNGSGVMQWINGDTLDCNWLNGLAHGKGYCKYASGACYIGTWDRGLKDGHGTFYQPGSKIPCNLEVSDCLTSHDGTSASSSSNEKITIGLLFLLQKLCKNWRLRRFLHRPRRISNGTTPVFDDNSGSHLCQDVSSKSFSADDQCLQDSEVDKDSVYEREYVQGVLIMEQPKNEDSRMSESGIAQENNWEKQAKGPMETIYKGHRSYYLMLNLQLGIRYTVGKITPVPLREVRSNDFGPRARIKMYFPCEGSQYTPPHYSVDFFWKDYCPMVFRNLREMFHIDAADYMMSICGGDSLKELSSPGKSGSIFYLSQDERFVIKTLRKTELKIGLMKYVLQILLKMLPKYYNHVKAYDNTLITKFFGVHRITLKPGRKVRFVVMGNMFCTELRIHRKYDLKGSTQGRSTKKQNINENTTLKDLDLSYVFHVDKPWREALFRQIALDCMFLESQSIIDYSMLLGIHFRAPNHLKRITSCQNALESTGISAETECSVALHHEETISSKGFLLVAADEPGPAVRGSHIRGSMVRAAEGGYEEVDLVLPGTGRFRVQLGVNMPARARKVQEDVNVEVENRDTIEEYDVVLYLGIIDILQEYNVSKRVEHAVKSLKFDPLSISAVDPNLYSRRFISFLEKVFPEQD.

An N-terminal signal peptide occupies residues 1–21; it reads MPGLHVVSFLVVLLLQLRSSG. MORN repeat units follow at residues 41–63, 64–86, 87–109, 110–132, 133–155, 156–178, 182–201, and 202–223; these read YVGS…DGAL, YDGE…SGAS, YEGD…DGSV, YKGS…NSDT, YEGF…DGNV, YIGR…NGDT, NWLN…SGAC, and YIGT…PGSK. A PIPK domain is found at 366 to 797; sequence GHRSYYLMLN…RFISFLEKVF (432 aa).

Expressed in young seedlings, shoot and seeds, and at lower level in roots, stem and leaf.

The catalysed reaction is a 1,2-diacyl-sn-glycero-3-phospho-(1D-myo-inositol 4-phosphate) + ATP = a 1,2-diacyl-sn-glycero-3-phospho-(1D-myo-inositol-4,5-bisphosphate) + ADP + H(+). In terms of biological role, involved in flowering. May suppress floral initiation by modifying the expression of genes related to floral induction. This chain is Phosphatidylinositol 4-phosphate 5-kinase 1 (PIPK1), found in Oryza sativa subsp. japonica (Rice).